Here is a 427-residue protein sequence, read N- to C-terminus: Heterogeneous nuclear ribonucleoprotein K (427 aa).

Residues 1-34 (METEQQEETFTNTETNGKRPAEDMEEEQAFKRSR) form a disordered region. A compositionally biased stretch (basic and acidic residues) spans 16–34 (NGKRPAEDMEEEQAFKRSR). KH domains follow at residues 39-101 (MVEL…LKKI) and 117-182 (DCEL…IKII). Tandem repeats lie at residues 51-73 (AGAV…NASV) and 56-59 (GKGG). The segment at 51–385 (AGAVIGKGGK…QIRHESGASI (335 aa)) is 2 X 22 AA approximate repeats. The tract at residues 56–371 (GKGGKNIKAL…LAGSIIGKGG (316 aa)) is 5 X 4 AA repeats of G-X-G-G. The segment at 209 to 246 (YGGFTMMFDDRRGRPVGFPMRGRGGFDRMPPNRGGRPM) is RNA-binding RGG-box. Repeat copies occupy residues 218–223 (DRRGRP), 230–233 (GRGG), and 240–243 (NRGG). The tract at residues 218 to 302 (DRRGRPVGFP…LMSYDRRGRP (85 aa)) is 2 X 6 AA approximate repeats. Residues 221 to 305 (GRPVGFPMRG…YDRRGRPGDR (85 aa)) are disordered. The segment covering 249-258 (SRRDYDDMSP) has biased composition (basic and acidic residues). Repeat copies occupy residues 268–271 (GRGG), 297–302 (DRRGRP), 363–385 (AGSI…GASI), and 368–371 (GKGG). Basic and acidic residues predominate over residues 295 to 305 (SYDRRGRPGDR). The 65-residue stretch at 351–415 (IITTQVTIPK…DQIQNAQYLL (65 aa)) folds into the KH 3 domain.

It is found in the cytoplasm. The protein resides in the nucleus. Its subcellular location is the nucleoplasm. Its function is as follows. One of the major pre-mRNA-binding proteins. Binds tenaciously to poly(C) sequences. Likely to play a role in the nuclear metabolism of hnRNAs, particularly for pre-mRNAs that contain cytidine-rich sequences. Can also bind poly(C) single-stranded DNA. May play an important role in p53/TP53 response to DNA damage, acting at the level of both transcription activation and repression. As part of a ribonucleoprotein complex, may negatively regulate the transcription of genes involved in neuronal differentiation. The sequence is that of Heterogeneous nuclear ribonucleoprotein K (HNRNPK) from Gallus gallus (Chicken).